The chain runs to 267 residues: Kit ligand (267 aa).

The N-terminal stretch at 1 to 25 (MKKTQTWIITCIYLQLLLFNPLVHT) is a signal peptide. At glutamine 26 the chain carries Pyrrolidone carboxylic acid. Topologically, residues 26 to 215 (QGICRNRVTD…SNSIEDSSLQ (190 aa)) are extracellular. 2 cysteine pairs are disulfide-bonded: cysteine 29/cysteine 114 and cysteine 68/cysteine 164. Residues asparagine 90, asparagine 97, asparagine 145, and asparagine 196 are each glycosylated (N-linked (GlcNAc...) asparagine). A helical membrane pass occupies residues 216 to 238 (WAAVALPAFFSLVIGFAFGALYW). Over 239–267 (KKKQPNLTRTVENRQINEEDNEISMLQEK) the chain is Cytoplasmic.

This sequence belongs to the SCF family. In terms of assembly, homodimer, non-covalently linked. Heterotetramer with KIT, binding two KIT molecules; thereby mediates KIT dimerization and subsequent activation by autophosphorylation. A soluble form is produced by proteolytic processing of the extracellular domain.

The protein localises to the cytoplasm. It localises to the cytoskeleton. It is found in the cell membrane. The protein resides in the cell projection. Its subcellular location is the lamellipodium. The protein localises to the filopodium. It localises to the secreted. Functionally, ligand for the receptor-type protein-tyrosine kinase KIT. Plays an essential role in the regulation of cell survival and proliferation, hematopoiesis, stem cell maintenance, gametogenesis, mast cell development, migration and function, and in melanogenesis. KITLG/SCF binding can activate several signaling pathways. Promotes phosphorylation of PIK3R1, the regulatory subunit of phosphatidylinositol 3-kinase, and subsequent activation of the kinase AKT1. KITLG/SCF and KIT also transmit signals via GRB2 and activation of RAS, RAF1 and the MAP kinases MAPK1/ERK2 and/or MAPK3/ERK1. KITLG/SCF and KIT promote activation of STAT family members STAT1, STAT3 and STAT5. KITLG/SCF and KIT promote activation of PLCG1, leading to the production of the cellular signaling molecules diacylglycerol and inositol 1,4,5-trisphosphate. KITLG/SCF acts synergistically with other cytokines, probably interleukins. This Ovis aries (Sheep) protein is Kit ligand (KITLG).